A 156-amino-acid chain; its full sequence is Transcriptional repressor NrdR (156 aa).

A zinc finger lies at 3–34 (CPFCSETDTKVIDSRLVADGAQVRRRRECLTC). The ATP-cone domain occupies 49-139 (PRVIKQDGTR…VYRSFQDLSE (91 aa)).

It belongs to the NrdR family. Requires Zn(2+) as cofactor.

Negatively regulates transcription of bacterial ribonucleotide reductase nrd genes and operons by binding to NrdR-boxes. This Saccharophagus degradans (strain 2-40 / ATCC 43961 / DSM 17024) protein is Transcriptional repressor NrdR.